Consider the following 87-residue polypeptide: DNA-directed RNA polymerase subunit omega (87 aa).

It belongs to the RNA polymerase subunit omega family. In terms of assembly, the RNAP catalytic core consists of 2 alpha, 1 beta, 1 beta' and 1 omega subunit. When a sigma factor is associated with the core the holoenzyme is formed, which can initiate transcription.

It catalyses the reaction RNA(n) + a ribonucleoside 5'-triphosphate = RNA(n+1) + diphosphate. Its function is as follows. Promotes RNA polymerase assembly. Latches the N- and C-terminal regions of the beta' subunit thereby facilitating its interaction with the beta and alpha subunits. In Thioalkalivibrio sulfidiphilus (strain HL-EbGR7), this protein is DNA-directed RNA polymerase subunit omega.